A 248-amino-acid chain; its full sequence is Triosephosphate isomerase (248 aa).

Residue 9–11 (NWK) participates in substrate binding. His94 serves as the catalytic Electrophile. Glu166 serves as the catalytic Proton acceptor. Substrate is bound by residues Gly172, Ser212, and 233 to 234 (GG).

Belongs to the triosephosphate isomerase family. Homodimer.

The protein localises to the cytoplasm. It carries out the reaction D-glyceraldehyde 3-phosphate = dihydroxyacetone phosphate. It participates in carbohydrate biosynthesis; gluconeogenesis. It functions in the pathway carbohydrate degradation; glycolysis; D-glyceraldehyde 3-phosphate from glycerone phosphate: step 1/1. Involved in the gluconeogenesis. Catalyzes stereospecifically the conversion of dihydroxyacetone phosphate (DHAP) to D-glyceraldehyde-3-phosphate (G3P). This Clostridium botulinum (strain Okra / Type B1) protein is Triosephosphate isomerase.